A 393-amino-acid polypeptide reads, in one-letter code: DNA-directed RNA polymerase subunit Rpo1C (393 aa).

This sequence belongs to the RNA polymerase beta' chain family. In terms of assembly, part of the RNA polymerase complex.

The protein resides in the cytoplasm. The enzyme catalyses RNA(n) + a ribonucleoside 5'-triphosphate = RNA(n+1) + diphosphate. Functionally, DNA-dependent RNA polymerase (RNAP) catalyzes the transcription of DNA into RNA using the four ribonucleoside triphosphates as substrates. Forms part of the jaw domain. The protein is DNA-directed RNA polymerase subunit Rpo1C of Halococcus morrhuae (Micrococcus morrhuae).